A 318-amino-acid polypeptide reads, in one-letter code: Acetyl-coenzyme A carboxylase carboxyl transferase subunit beta (318 aa).

The CoA carboxyltransferase N-terminal domain occupies L25 to A294. Residues C29, C32, C48, and C51 each coordinate Zn(2+). The C4-type zinc finger occupies C29–C51. The interval V286–D318 is disordered.

This sequence belongs to the AccD/PCCB family. As to quaternary structure, acetyl-CoA carboxylase is a heterohexamer composed of biotin carboxyl carrier protein (AccB), biotin carboxylase (AccC) and two subunits each of ACCase subunit alpha (AccA) and ACCase subunit beta (AccD). Zn(2+) is required as a cofactor.

It localises to the cytoplasm. It catalyses the reaction N(6)-carboxybiotinyl-L-lysyl-[protein] + acetyl-CoA = N(6)-biotinyl-L-lysyl-[protein] + malonyl-CoA. The protein operates within lipid metabolism; malonyl-CoA biosynthesis; malonyl-CoA from acetyl-CoA: step 1/1. Component of the acetyl coenzyme A carboxylase (ACC) complex. Biotin carboxylase (BC) catalyzes the carboxylation of biotin on its carrier protein (BCCP) and then the CO(2) group is transferred by the transcarboxylase to acetyl-CoA to form malonyl-CoA. The protein is Acetyl-coenzyme A carboxylase carboxyl transferase subunit beta of Jannaschia sp. (strain CCS1).